The primary structure comprises 478 residues: MSENKNSEAEDVFEFLDSLPEAKNGGKMVNTDVKGSQEGVKGGSNSVAGKTGNDGKKGDDDIFEFLEELEKSNLSLTDKKGVEKKAPSESVNNKAQDEKVEESKENKNSEQDAHGKEKEPQQQEKEEEEEEEEEEEEEEEETPLHDPIASISNWWSSSGSAKVSSIWNKTAEQASQIKNRLAQEQLDLTSKINTSTITEIARNLQKIVVGETEEVLRIHLVHDLVNYPSLQYNIESKFDQVLSSQVEGGIRIFVDEWGHPNNNGITPVEKKPSVADGELGNSKKKLQFNLFDGKVTDGEKLAFANLENAVKLFNTAHEEYQKQQKEADATPDDDRSSISSNSNKISDLFISILPIAIPQKQKDADGDFQVTDSNTPGNFNFTLVLKDITNDITTITRSQGFPVKWVNWLEGSVEKTGSTASEERNKSYDQKKQKESEDEDEDDEIIDPSEWVKEWIEDGLSLSFGVMAQNYVIDRMGL.

Residues 1-153 are disordered; it reads MSENKNSEAE…LHDPIASISN (153 aa). Basic and acidic residues-rich tracts occupy residues 77-87 and 95-124; these read TDKKGVEKKAP and AQDE…QQQE. The segment covering 125–141 has biased composition (acidic residues); that stretch reads KEEEEEEEEEEEEEEEE. A Phosphoserine modification is found at serine 273. 2 stretches are compositionally biased toward basic and acidic residues: residues 321-336 and 421-435; these read QKQQ…DDRS and SEER…KQKE. Disordered regions lie at residues 321-341 and 416-448; these read QKQQ…ISSN and TGST…IIDP. Serine 436 carries the post-translational modification Phosphoserine. Over residues 436-447 the composition is skewed to acidic residues; it reads SEDEDEDDEIID.

Belongs to the MTC1 family. Interacts with ribosomes.

The protein resides in the cytoplasm. The protein localises to the cytoplasmic vesicle. It localises to the COPI-coated vesicle. Involved in telomere capping. The protein is Maintenance of telomere capping protein 1 (MTC1) of Saccharomyces cerevisiae (strain ATCC 204508 / S288c) (Baker's yeast).